A 387-amino-acid chain; its full sequence is MSDQSPLALAHALIRCPSVTPEEGGALSFLAERLTEAGFSVERPVFSEAGTPDIENLYARIGTAGPVLVFAGHTDVVPPGEAASWTHGPFSGEITDGFLYGRGAVDMKGGIACMLAATLSFLDRHGPDFGGSIAFLITGDEEGPAVNGTVKLLDWAKARGERFDHCLLGEPTNPDSLGEMIKIGRRGSLTGRITVHGRQGHVAYPHRAENPIPGLLRLASALIAEPLDGGTAHFDASNLEFTTIDVGNPATNVIPASAKAVFNVRFNDDWTAETLGAEIRKRLEAAAGNAVRFSLDLQPSNSPAFLTQPDAFVDLVADAIAAETGRRPALSTTGGTSDARFIKDACPVIEFGLVGRTMHETDERVAVADLDRLTAIYGRVLERYFSS.

Zn(2+) is bound at residue histidine 73. The active site involves aspartate 75. Aspartate 106 provides a ligand contact to Zn(2+). Residue glutamate 141 is the Proton acceptor of the active site. 3 residues coordinate Zn(2+): glutamate 142, glutamate 170, and histidine 359.

The protein belongs to the peptidase M20A family. DapE subfamily. As to quaternary structure, homodimer. Zn(2+) is required as a cofactor. Co(2+) serves as cofactor.

It catalyses the reaction N-succinyl-(2S,6S)-2,6-diaminopimelate + H2O = (2S,6S)-2,6-diaminopimelate + succinate. It functions in the pathway amino-acid biosynthesis; L-lysine biosynthesis via DAP pathway; LL-2,6-diaminopimelate from (S)-tetrahydrodipicolinate (succinylase route): step 3/3. Functionally, catalyzes the hydrolysis of N-succinyl-L,L-diaminopimelic acid (SDAP), forming succinate and LL-2,6-diaminopimelate (DAP), an intermediate involved in the bacterial biosynthesis of lysine and meso-diaminopimelic acid, an essential component of bacterial cell walls. This chain is Succinyl-diaminopimelate desuccinylase, found in Methylorubrum populi (strain ATCC BAA-705 / NCIMB 13946 / BJ001) (Methylobacterium populi).